A 146-amino-acid chain; its full sequence is ATP synthase F(0) complex subunit C2, mitochondrial (146 aa).

A mitochondrion-targeting transit peptide spans 1-71 (MYACSKFVST…RSFQTSAISR (71 aa)). A helical membrane pass occupies residues 87–107 (VGVAGSGAGIGTVFGSLIIGY). At Lys114 the chain carries N6,N6,N6-trimethyllysine. The helical transmembrane segment at 122–142 (ILGFALSEAMGLFCLMVAFLI) threads the bilayer.

The protein belongs to the ATPase C chain family. F-type ATPases have 2 components, CF(1) - the catalytic core - and CF(0) - the membrane proton channel. CF(1) has five subunits: alpha(3), beta(3), gamma(1), delta(1), epsilon(1). CF(0) has three main subunits: a, b and c. Interacts with DNAJC30; interaction is direct. Trimethylated by ATPSCKMT at Lys-114. Methylation is required for proper incorporation of the C subunit into the ATP synthase complex and mitochondrial respiration.

It is found in the mitochondrion membrane. Its function is as follows. Mitochondrial membrane ATP synthase (F(1)F(0) ATP synthase or Complex V) produces ATP from ADP in the presence of a proton gradient across the membrane which is generated by electron transport complexes of the respiratory chain. F-type ATPases consist of two structural domains, F(1) - containing the extramembraneous catalytic core and F(0) - containing the membrane proton channel, linked together by a central stalk and a peripheral stalk. During catalysis, ATP synthesis in the catalytic domain of F(1) is coupled via a rotary mechanism of the central stalk subunits to proton translocation. Part of the complex F(0) domain. A homomeric c-ring of probably 10 subunits is part of the complex rotary element. In Mus musculus (Mouse), this protein is ATP synthase F(0) complex subunit C2, mitochondrial.